The chain runs to 251 residues: Flap endonuclease Xni (251 aa).

Positions 51-72 (EDDRSDSWRHQSLPDYKAGRSP) are disordered. Asp-104 is a Mg(2+) binding site. Positions 160–249 (VLPHQLPDYW…LSGNLQQLRL (90 aa)) constitute a 5'-3' exonuclease domain. The K(+) site is built by Leu-171, Ala-172, Pro-180, Val-182, and Ile-185. The tract at residues 184 to 189 (GIGAKT) is interaction with DNA.

The protein belongs to the Xni family. Mg(2+) is required as a cofactor. K(+) serves as cofactor.

Has flap endonuclease activity. During DNA replication, flap endonucleases cleave the 5'-overhanging flap structure that is generated by displacement synthesis when DNA polymerase encounters the 5'-end of a downstream Okazaki fragment. The polypeptide is Flap endonuclease Xni (Yersinia enterocolitica serotype O:8 / biotype 1B (strain NCTC 13174 / 8081)).